We begin with the raw amino-acid sequence, 142 residues long: Small ribosomal subunit protein uS12z (142 aa).

Pro61 carries the hydroxyproline modification.

It belongs to the universal ribosomal protein uS12 family.

This is Small ribosomal subunit protein uS12z (RPS23A) from Arabidopsis thaliana (Mouse-ear cress).